The sequence spans 543 residues: CTP synthase (543 aa).

The tract at residues 1 to 266 (MKTNYIFVTG…DDYICERFSL (266 aa)) is amidoligase domain. Serine 14 serves as a coordination point for CTP. A UTP-binding site is contributed by serine 14. Residues 15–20 (SLGKGI) and aspartate 72 contribute to the ATP site. Positions 72 and 140 each coordinate Mg(2+). Residues 147-149 (DIE), 187-192 (KTKPTQ), and lysine 223 each bind CTP. UTP is bound by residues 187–192 (KTKPTQ) and lysine 223. Position 239–241 (239–241 (KDV)) interacts with ATP. The Glutamine amidotransferase type-1 domain occupies 291–538 (TVGIVGKYID…IKAASEYQKK (248 aa)). Glycine 352 contacts L-glutamine. Catalysis depends on cysteine 379, which acts as the Nucleophile; for glutamine hydrolysis. L-glutamine-binding positions include 380–383 (LGMQ), glutamate 403, and arginine 466. Residues histidine 511 and glutamate 513 contribute to the active site.

Belongs to the CTP synthase family. As to quaternary structure, homotetramer.

It carries out the reaction UTP + L-glutamine + ATP + H2O = CTP + L-glutamate + ADP + phosphate + 2 H(+). The enzyme catalyses L-glutamine + H2O = L-glutamate + NH4(+). The catalysed reaction is UTP + NH4(+) + ATP = CTP + ADP + phosphate + 2 H(+). The protein operates within pyrimidine metabolism; CTP biosynthesis via de novo pathway; CTP from UDP: step 2/2. With respect to regulation, allosterically activated by GTP, when glutamine is the substrate; GTP has no effect on the reaction when ammonia is the substrate. The allosteric effector GTP functions by stabilizing the protein conformation that binds the tetrahedral intermediate(s) formed during glutamine hydrolysis. Inhibited by the product CTP, via allosteric rather than competitive inhibition. Its function is as follows. Catalyzes the ATP-dependent amination of UTP to CTP with either L-glutamine or ammonia as the source of nitrogen. Regulates intracellular CTP levels through interactions with the four ribonucleotide triphosphates. The sequence is that of CTP synthase from Baumannia cicadellinicola subsp. Homalodisca coagulata.